A 178-amino-acid polypeptide reads, in one-letter code: RNA pyrophosphohydrolase (178 aa).

One can recognise a Nudix hydrolase domain in the interval 18 to 171; sequence PYRPCVGLMV…KRKVYEQVVA (154 aa). Residues 59–80 carry the Nudix box motif; that stretch reads GGIDKGEDPAQAALRELYEETG.

The protein belongs to the Nudix hydrolase family. RppH subfamily. It depends on a divalent metal cation as a cofactor.

Its function is as follows. Accelerates the degradation of transcripts by removing pyrophosphate from the 5'-end of triphosphorylated RNA, leading to a more labile monophosphorylated state that can stimulate subsequent ribonuclease cleavage. This Brucella canis (strain ATCC 23365 / NCTC 10854 / RM-666) protein is RNA pyrophosphohydrolase.